A 454-amino-acid polypeptide reads, in one-letter code: Putative serine/threonine-protein phosphatase C27B7.6 (454 aa).

Mn(2+) contacts are provided by D65, H67, D93, and N125. The Proton donor role is filled by H126. Mn(2+) is bound by residues H174 and H252. Residues R414–A454 are disordered. A compositionally biased stretch (pro residues) spans T424–P447.

It belongs to the PPP phosphatase family. PP-1 subfamily. Requires Mn(2+) as cofactor.

The enzyme catalyses O-phospho-L-seryl-[protein] + H2O = L-seryl-[protein] + phosphate. The catalysed reaction is O-phospho-L-threonyl-[protein] + H2O = L-threonyl-[protein] + phosphate. This chain is Putative serine/threonine-protein phosphatase C27B7.6, found in Caenorhabditis elegans.